The primary structure comprises 906 residues: Catenin alpha-2 (906 aa).

Residues 866–880 (KKPLVKREKPEEYQT) are compositionally biased toward basic and acidic residues. The disordered stretch occupies residues 866–892 (KKPLVKREKPEEYQTRVRRGSQKKHIS). Over residues 881 to 891 (RVRRGSQKKHI) the composition is skewed to basic residues.

It belongs to the vinculin/alpha-catenin family. As to quaternary structure, interacts with CDH1 and CDH2. As to expression, mainly in the nervous system (at protein level).

It localises to the cell membrane. The protein localises to the cytoplasm. It is found in the cytoskeleton. The protein resides in the cell junction. Its subcellular location is the adherens junction. It localises to the cell projection. The protein localises to the axon. It is found in the nucleus. Its function is as follows. May function as a linker between cadherin adhesion receptors and the cytoskeleton to regulate cell-cell adhesion and differentiation in the nervous system. The chain is Catenin alpha-2 (CTNNA2) from Gallus gallus (Chicken).